A 498-amino-acid chain; its full sequence is DELTA-thalatoxin-Avl2a (498 aa).

The signal sequence occupies residues 1–22 (MSPYFKLSSALIFLAITMEALC). Positions 23–35 (SPIENTSTSNKDN) are excised as a propeptide. Positions 23 to 359 (SPIENTSTSN…GFLHFGCSFL (337 aa)) constitute an MACPF domain. Residues 135 to 159 (AAVTNNIASSEEEVQGLSLNLKAYS) adopt a coiled-coil conformation. Cystine bridges form between C389-C402, C396-C410, and C412-C422. Residues 410–422 (CECGGPYDLARTC) enclose the EGF-like domain.

It is found in the secreted. Its subcellular location is the nematocyst. Is lethal to mice, and may cause hemolytic activity. This Actineria villosa (Okinawan sea anemone) protein is DELTA-thalatoxin-Avl2a.